Reading from the N-terminus, the 537-residue chain is CTP synthase (537 aa).

Residues 1-268 (MSFKCIFLTG…STFITEKLGL (268 aa)) form an amidoligase domain region. Position 14 (Ser14) interacts with CTP. Ser14 is a UTP binding site. Residue 15 to 20 (SLGKGL) coordinates ATP. L-glutamine is bound at residue Tyr55. Asp72 lines the ATP pocket. 2 residues coordinate Mg(2+): Asp72 and Glu142. Residues 149 to 151 (DIE), 188 to 193 (KTKPTQ), and Lys224 contribute to the CTP site. UTP-binding positions include 188-193 (KTKPTQ) and Lys224. In terms of domain architecture, Glutamine amidotransferase type-1 spans 294–533 (RLGLVGKYVQ…IEAALLHSRN (240 aa)). Gly353 provides a ligand contact to L-glutamine. Cys380 (nucleophile; for glutamine hydrolysis) is an active-site residue. L-glutamine-binding positions include 381–384 (LGMQ), Glu404, and Arg461. Active-site residues include His506 and Glu508.

The protein belongs to the CTP synthase family. In terms of assembly, homotetramer.

The catalysed reaction is UTP + L-glutamine + ATP + H2O = CTP + L-glutamate + ADP + phosphate + 2 H(+). It carries out the reaction L-glutamine + H2O = L-glutamate + NH4(+). It catalyses the reaction UTP + NH4(+) + ATP = CTP + ADP + phosphate + 2 H(+). It functions in the pathway pyrimidine metabolism; CTP biosynthesis via de novo pathway; CTP from UDP: step 2/2. With respect to regulation, allosterically activated by GTP, when glutamine is the substrate; GTP has no effect on the reaction when ammonia is the substrate. The allosteric effector GTP functions by stabilizing the protein conformation that binds the tetrahedral intermediate(s) formed during glutamine hydrolysis. Inhibited by the product CTP, via allosteric rather than competitive inhibition. Functionally, catalyzes the ATP-dependent amination of UTP to CTP with either L-glutamine or ammonia as the source of nitrogen. Regulates intracellular CTP levels through interactions with the four ribonucleotide triphosphates. The protein is CTP synthase of Chlamydia abortus (strain DSM 27085 / S26/3) (Chlamydophila abortus).